Here is a 601-residue protein sequence, read N- to C-terminus: Glutathione-regulated potassium-efflux system protein KefB (601 aa).

A run of 13 helical transmembrane segments spans residues 4 to 24, 29 to 49, 55 to 75, 87 to 107, 115 to 135, 152 to 172, 177 to 197, 207 to 227, 230 to 250, 268 to 288, 291 to 311, 324 to 344, and 356 to 376; these read SDFLLAGVLFLFAAVAAVPLA, IGAVLGYLLAGIAIGPWGLGF, EILHFSELGVVFLMFIIGLEL, IFGVGAAQVLLSAALLAGLLM, AAVVGGIGLAMSSTAMALQLM, VLLFQDLAVIPALALVPLLAG, HFDWMKIGMKVLAFVGMLIGG, FIAASGVREVFTAATLLLVLG, LFMDALGLSMALGTFIAGVLL, GLLLGLFFISVGMSLNLGVLY, LLWVVISVVVLVAVKILVLYL, MQFAGVLSQGGEFAFVLFSTA, and ALLLVTVTLSMMTTPLLMKLV. Residues 400–519 enclose the RCK N-terminal domain; that stretch reads KPQVIVVGFG…AGVTQFSRET (120 aa).

This sequence belongs to the monovalent cation:proton antiporter 2 (CPA2) transporter (TC 2.A.37) family. KefB subfamily. As to quaternary structure, interacts with the regulatory subunit KefG.

The protein resides in the cell inner membrane. In terms of biological role, pore-forming subunit of a potassium efflux system that confers protection against electrophiles. Catalyzes K(+)/H(+) antiport. This is Glutathione-regulated potassium-efflux system protein KefB from Escherichia coli O139:H28 (strain E24377A / ETEC).